The following is a 660-amino-acid chain: U-box domain-containing protein 13 (660 aa).

The tract at residues 227–252 (DDNGEEQKVGVNSRSNGQTSTAASQK) is disordered. The segment covering 236–250 (GVNSRSNGQTSTAAS) has biased composition (polar residues). One can recognise a U-box domain in the interval 255–329 (VIPDDFRCPI…AQWCEANDIE (75 aa)). ARM repeat units follow at residues 384 to 423 (ADNR…NLSI), 425 to 464 (ENNK…SLSV), 466 to 505 (DENK…NLCI), 507 to 546 (QGNK…ILSS), and 548 to 587 (PEGK…HLCS). Positions 631–660 (AEQQKETAVSQPEEEAEPTHPESTTEAADT) are disordered. Positions 651–660 (PESTTEAADT) are enriched in polar residues.

Binds to SD11, SD16, SD17, SD18, SD113, SD129 and SD25. Post-translationally, phosphorylated by SD1-6 and SD1-7.

It is found in the nucleus. It localises to the cytoplasm. The enzyme catalyses S-ubiquitinyl-[E2 ubiquitin-conjugating enzyme]-L-cysteine + [acceptor protein]-L-lysine = [E2 ubiquitin-conjugating enzyme]-L-cysteine + N(6)-ubiquitinyl-[acceptor protein]-L-lysine.. The protein operates within protein modification; protein ubiquitination. Its function is as follows. Functions as an E3 ubiquitin ligase. This Arabidopsis thaliana (Mouse-ear cress) protein is U-box domain-containing protein 13 (PUB13).